The chain runs to 155 residues: Small ribosomal subunit protein uS7c (155 aa).

This sequence belongs to the universal ribosomal protein uS7 family. In terms of assembly, part of the 30S ribosomal subunit.

The protein resides in the plastid. It localises to the chloroplast. Functionally, one of the primary rRNA binding proteins, it binds directly to 16S rRNA where it nucleates assembly of the head domain of the 30S subunit. In Stewartia pseudocamellia (Japanese stewartia), this protein is Small ribosomal subunit protein uS7c (rps7).